The primary structure comprises 302 residues: Nucleoside kinase (302 aa).

The substrate site is built by Asp-17, Gln-33, Gly-43, and Asn-47. Residue Gln-109 coordinates ATP. Substrate-binding positions include Thr-111 to Phe-113 and Gln-163. ATP contacts are provided by residues Asn-186 and Thr-214–Gly-219. Asp-247 serves as a coordination point for substrate. The Proton acceptor role is filled by Asp-247.

As to quaternary structure, homodimer. It depends on Mg(2+) as a cofactor. The cofactor is Mn(2+).

It carries out the reaction cytidine + ATP = CMP + ADP + H(+). The enzyme catalyses guanosine + ATP = GMP + ADP + H(+). The catalysed reaction is inosine + ATP = IMP + ADP + H(+). Catalyzes the phosphorylation of a wide range of nucleosides to yield nucleoside monophosphates. Shows the highest activity for inosine, guanosine and cytidine, but very poor kinase activity with adenosine, thymidine, uridine and xanthosine. ATP is the best phosphate donor, but can also use ITP and GTP. Shows extremely low activity with fructose-6-phosphate. In Methanocaldococcus jannaschii (strain ATCC 43067 / DSM 2661 / JAL-1 / JCM 10045 / NBRC 100440) (Methanococcus jannaschii), this protein is Nucleoside kinase.